A 779-amino-acid chain; its full sequence is Lysosome membrane protein 2-A (779 aa).

Residues 1-17 (MVKRGCCHRKMVNHKGC) lie on the Cytoplasmic side of the membrane. A helical membrane pass occupies residues 18–38 (LVSGIFLAVIGAVLFILAFAL). The Lumenal portion of the chain corresponds to 39–732 (LPHLINQTTQ…LLNSQFKLIK (694 aa)). Asparagine 44, asparagine 86, asparagine 95, asparagine 114, asparagine 117, asparagine 201, asparagine 239, asparagine 262, asparagine 266, asparagine 277, asparagine 369, asparagine 410, asparagine 440, asparagine 508, asparagine 543, asparagine 601, asparagine 619, asparagine 651, and asparagine 693 each carry an N-linked (GlcNAc...) asparagine glycan. A helical membrane pass occupies residues 733–753 (ILGFVPVIVVSIIGGIILIAG). Topologically, residues 754–779 (ISMFAFGFKKLRQQKQQGYQAIINNE) are cytoplasmic. The Tyrosine-type lysosomal sorting signal motif lies at 771–774 (GYQA).

The protein belongs to the CD36 family. Heavily glycosylated.

It localises to the lysosome membrane. Its function is as follows. May act as a lysosomal receptor. May be involved in macropinocytosis and fluid phase exocytosis. Binds to the anionic phospholipid phosphoinositol 4,5-bisphosphate, but not to phosphatidylcholine and only weakly to phosphatidylserine. This is Lysosome membrane protein 2-A (lmpA) from Dictyostelium discoideum (Social amoeba).